A 497-amino-acid polypeptide reads, in one-letter code: 4,4'-diaponeurosporene oxygenase (497 aa).

7-19 (VIGGGLGGISAAI) is a binding site for FAD.

Belongs to the carotenoid/retinoid oxidoreductase family. CrtP subfamily. FAD is required as a cofactor.

The enzyme catalyses all-trans-4,4'-diaponeurosporene + 2 AH2 + 2 O2 = 4,4'-diaponeurosporenal + 2 A + 3 H2O. It functions in the pathway carotenoid biosynthesis; staphyloxanthin biosynthesis; staphyloxanthin from farnesyl diphosphate: step 3/5. Its function is as follows. Involved in the biosynthesis of the yellow-orange carotenoid staphyloxanthin, which plays a role in the virulence via its protective function against oxidative stress. Catalyzes the oxidation of the terminal methyl side group of 4,4'-diaponeurosporene to form 4,4'-diaponeurosporen-4-al. The polypeptide is 4,4'-diaponeurosporene oxygenase (Staphylococcus aureus (strain MW2)).